We begin with the raw amino-acid sequence, 74 residues long: UPF0346 protein RBAM_019500 (74 aa).

The protein belongs to the UPF0346 family.

The sequence is that of UPF0346 protein RBAM_019500 from Bacillus velezensis (strain DSM 23117 / BGSC 10A6 / LMG 26770 / FZB42) (Bacillus amyloliquefaciens subsp. plantarum).